The following is a 292-amino-acid chain: Bifunctional protein FolD (292 aa).

NADP(+) contacts are provided by residues 166 to 168 (GRS), serine 191, and isoleucine 232.

This sequence belongs to the tetrahydrofolate dehydrogenase/cyclohydrolase family. Homodimer.

It carries out the reaction (6R)-5,10-methylene-5,6,7,8-tetrahydrofolate + NADP(+) = (6R)-5,10-methenyltetrahydrofolate + NADPH. The enzyme catalyses (6R)-5,10-methenyltetrahydrofolate + H2O = (6R)-10-formyltetrahydrofolate + H(+). Its pathway is one-carbon metabolism; tetrahydrofolate interconversion. In terms of biological role, catalyzes the oxidation of 5,10-methylenetetrahydrofolate to 5,10-methenyltetrahydrofolate and then the hydrolysis of 5,10-methenyltetrahydrofolate to 10-formyltetrahydrofolate. The chain is Bifunctional protein FolD from Synechococcus sp. (strain RCC307).